The chain runs to 306 residues: Pantothenate kinase (306 aa).

91–98 (GSVAVGKS) serves as a coordination point for ATP.

It belongs to the prokaryotic pantothenate kinase family.

The protein localises to the cytoplasm. It catalyses the reaction (R)-pantothenate + ATP = (R)-4'-phosphopantothenate + ADP + H(+). Its pathway is cofactor biosynthesis; coenzyme A biosynthesis; CoA from (R)-pantothenate: step 1/5. The polypeptide is Pantothenate kinase (coaA) (Streptococcus pneumoniae serotype 4 (strain ATCC BAA-334 / TIGR4)).